The following is a 181-amino-acid chain: MSANENNLIWIDLEMTGLDPERDRIIEIATLVTDANLNILAEGPTIAVHQSDEQLALMDDWNVRTHTASGLVERVKASTMGDREAELATLEFLKQWVPAGKSPICGNSIGQDRRFLFKYMPELEVYFHYRYLDVSTLKELARRWKPEILDGFTKQGTHQAMDDIRESVAELAYYREHFIKL.

The Exonuclease domain maps to 8 to 171 (LIWIDLEMTG…DDIRESVAEL (164 aa)). Y129 is an active-site residue.

This sequence belongs to the oligoribonuclease family.

It is found in the cytoplasm. Functionally, 3'-to-5' exoribonuclease specific for small oligoribonucleotides. This is Oligoribonuclease from Shigella flexneri.